A 202-amino-acid polypeptide reads, in one-letter code: Inner membrane-spanning protein YciB (202 aa).

5 helical membrane-spanning segments follow: residues 47 to 67 (ILLATVVVIAATVAQIIWVHF), 75 to 95 (MLWVSLVLVVVFGGLTLAFQN), 101 to 121 (WKPTILYWVFAGSMIFSAFIL), 146 to 166 (LSWIGFFLFMGALNLFVAFNF), and 174 to 194 (FKLFGGMGLMLVFVLGQGMLL).

The protein belongs to the YciB family.

The protein resides in the cell inner membrane. Functionally, plays a role in cell envelope biogenesis, maintenance of cell envelope integrity and membrane homeostasis. This Dechloromonas aromatica (strain RCB) protein is Inner membrane-spanning protein YciB.